Here is an 85-residue protein sequence, read N- to C-terminus: U4-theraphotoxin-Hhn1z (85 aa).

The N-terminal stretch at 1–22 is a signal peptide; the sequence is MKMTLIAILTCAAVLVLHTTAA. A propeptide spanning residues 23 to 48 is cleaved from the precursor; the sequence is EELEAESQLMEVGMPDTELEAVDEER. Intrachain disulfides connect cysteine 52–cysteine 66, cysteine 56–cysteine 77, and cysteine 71–cysteine 82.

This sequence belongs to the neurotoxin 12 (Hwtx-2) family. 02 (Hwtx-2) subfamily. In terms of tissue distribution, expressed by the venom gland.

The protein resides in the secreted. Postsynaptic neurotoxin. This is U4-theraphotoxin-Hhn1z from Cyriopagopus hainanus (Chinese bird spider).